A 435-amino-acid polypeptide reads, in one-letter code: Proline--tRNA ligase (435 aa).

Belongs to the class-II aminoacyl-tRNA synthetase family. ProS type 2 subfamily. In terms of assembly, homodimer.

It localises to the cytoplasm. The enzyme catalyses tRNA(Pro) + L-proline + ATP = L-prolyl-tRNA(Pro) + AMP + diphosphate. Its function is as follows. Catalyzes the attachment of proline to tRNA(Pro) in a two-step reaction: proline is first activated by ATP to form Pro-AMP and then transferred to the acceptor end of tRNA(Pro). The polypeptide is Proline--tRNA ligase (proS) (Sulfurimonas denitrificans (strain ATCC 33889 / DSM 1251) (Thiomicrospira denitrificans (strain ATCC 33889 / DSM 1251))).